The chain runs to 479 residues: Ammonium transporter Rh type C (479 aa).

At 1–9 (MAWNTNLRW) the chain is on the cytoplasmic side. Residues 10–30 (RLPLTCLLLQVIMVILFGVFV) form a helical membrane-spanning segment. Over 31–60 (RYDFEADAHWWSERTHKNLSDMENEFYYRY) the chain is Extracellular. N-linked (GlcNAc...) asparagine glycosylation is present at Asn-48. A helical transmembrane segment spans residues 61–81 (PSFQDVHVMVFVGFGFLMTFL). The Cytoplasmic portion of the chain corresponds to 82 to 85 (QRYG). Residues 86–106 (FSAVGFNFLLAAFGIQWALLM) form a helical membrane-spanning segment. Residues 107–123 (QGWFHFLQDRYIVVGVE) lie on the Extracellular side of the membrane. The helical transmembrane segment at 124-144 (NLINADFCVASVCVAFGAVLG) threads the bilayer. Topologically, residues 145–148 (KVSP) are cytoplasmic. The helical transmembrane segment at 149 to 169 (IQLLIMTFFQVTLFAVNEFIL) threads the bilayer. Over 170–177 (LNLLKVKD) the chain is Extracellular. The helical transmembrane segment at 178-200 (AGGSMTIHTFGAYFGLTVTRILY) threads the bilayer. Over 201–218 (RRNLEQSKERQNSVYQSD) the chain is Cytoplasmic. The chain crosses the membrane as a helical span at residues 219 to 239 (LFAMIGTLFLWMYWPSFNSAI). Over 240–250 (SYHGDSQHRAA) the chain is Extracellular. Residues 251–271 (INTYCSLAACVLTSVAISSAL) form a helical membrane-spanning segment. The Cytoplasmic segment spans residues 272–281 (HKKGKLDMVH). Residues 282–302 (IQNATLAGGVAVGTAAEMMLM) traverse the membrane as a helical segment. A topological domain (extracellular) is located at residue Pro-303. A helical transmembrane segment spans residues 304-324 (YGALIIGFVCGIISTLGFVYL). At 325-345 (TPFLESRLHIQDTCGINNLHG) the chain is on the cytoplasmic side. Residues 346 to 366 (IPGIIGGIVGAVTAASASLEV) form a helical membrane-spanning segment. At 367–394 (YGKEGLVHSFDFQGFNGDWTARTQGKFQ) the chain is on the extracellular side. A helical transmembrane segment spans residues 395 to 415 (IYGLLVTLAMALMGGIIVGLI). Residues 416-479 (LRLPFWGQPS…PMASSVPLVP (64 aa)) are Cytoplasmic-facing.

This sequence belongs to the ammonium transporter (TC 2.A.49) family. Rh subfamily. Homotrimer. N-glycosylated. As to expression, expressed in brain, testis, placenta, pancreas, esophagus and prostate. Expressed in squamous epithelial tissues (at protein level). Expressed in kidney.

It localises to the cell membrane. The protein resides in the apical cell membrane. The enzyme catalyses NH4(+)(in) = NH4(+)(out). It carries out the reaction methylamine(out) = methylamine(in). The catalysed reaction is CO2(out) = CO2(in). Functionally, ammonium transporter involved in the maintenance of acid-base homeostasis. Transports ammonium and its related derivative methylammonium across the plasma membrane of epithelial cells likely contributing to renal transepithelial ammonia transport and ammonia metabolism. Postulated to primarily mediate an electroneutral bidirectional transport of NH3 ammonia species according to a mechanism that implies interaction of an NH4(+) ion with acidic residues of the pore entry followed by dissociation of NH4(+) into NH3 and H(+). As a result NH3 transits through the central pore and is protonated on the extracellular side reforming NH4(+). May act as a CO2 channel providing for renal acid secretion. This is Ammonium transporter Rh type C (RHCG) from Homo sapiens (Human).